A 195-amino-acid polypeptide reads, in one-letter code: Peptidyl-tRNA hydrolase (195 aa).

Tyr18 lines the tRNA pocket. His23 serves as the catalytic Proton acceptor. TRNA-binding residues include Tyr69, Asn71, and Asn117.

Belongs to the PTH family. In terms of assembly, monomer.

The protein resides in the cytoplasm. It carries out the reaction an N-acyl-L-alpha-aminoacyl-tRNA + H2O = an N-acyl-L-amino acid + a tRNA + H(+). Hydrolyzes ribosome-free peptidyl-tRNAs (with 1 or more amino acids incorporated), which drop off the ribosome during protein synthesis, or as a result of ribosome stalling. Functionally, catalyzes the release of premature peptidyl moieties from peptidyl-tRNA molecules trapped in stalled 50S ribosomal subunits, and thus maintains levels of free tRNAs and 50S ribosomes. In Nitrosomonas europaea (strain ATCC 19718 / CIP 103999 / KCTC 2705 / NBRC 14298), this protein is Peptidyl-tRNA hydrolase.